The chain runs to 448 residues: ATP-dependent protease ATPase subunit HslU (448 aa).

ATP contacts are provided by residues Val21, Gly63–Glu68, Asp260, Glu326, and Arg398.

This sequence belongs to the ClpX chaperone family. HslU subfamily. A double ring-shaped homohexamer of HslV is capped on each side by a ring-shaped HslU homohexamer. The assembly of the HslU/HslV complex is dependent on binding of ATP.

It is found in the cytoplasm. Functionally, ATPase subunit of a proteasome-like degradation complex; this subunit has chaperone activity. The binding of ATP and its subsequent hydrolysis by HslU are essential for unfolding of protein substrates subsequently hydrolyzed by HslV. HslU recognizes the N-terminal part of its protein substrates and unfolds these before they are guided to HslV for hydrolysis. This chain is ATP-dependent protease ATPase subunit HslU, found in Sulfurihydrogenibium sp. (strain YO3AOP1).